A 234-amino-acid chain; its full sequence is Probable chemoreceptor glutamine deamidase CheD 1 (234 aa).

The interval 183–234 (AREAAGPRGERAARARPRVELFGTPAPKAQATPRIELFGTRATQPATRKQEA) is disordered. The segment covering 190–201 (RGERAARARPRV) has biased composition (basic and acidic residues). Residues 223-234 (RATQPATRKQEA) are compositionally biased toward polar residues.

The protein belongs to the CheD family.

The enzyme catalyses L-glutaminyl-[protein] + H2O = L-glutamyl-[protein] + NH4(+). In terms of biological role, probably deamidates glutamine residues to glutamate on methyl-accepting chemotaxis receptors (MCPs), playing an important role in chemotaxis. The polypeptide is Probable chemoreceptor glutamine deamidase CheD 1 (Burkholderia thailandensis (strain ATCC 700388 / DSM 13276 / CCUG 48851 / CIP 106301 / E264)).